The chain runs to 158 residues: NADH-quinone oxidoreductase subunit B (158 aa).

Cys-37, Cys-38, Cys-102, and Cys-132 together coordinate [4Fe-4S] cluster.

It belongs to the complex I 20 kDa subunit family. In terms of assembly, NDH-1 is composed of 14 different subunits. Subunits NuoB, C, D, E, F, and G constitute the peripheral sector of the complex. The cofactor is [4Fe-4S] cluster.

Its subcellular location is the cell inner membrane. It carries out the reaction a quinone + NADH + 5 H(+)(in) = a quinol + NAD(+) + 4 H(+)(out). Functionally, NDH-1 shuttles electrons from NADH, via FMN and iron-sulfur (Fe-S) centers, to quinones in the respiratory chain. Couples the redox reaction to proton translocation (for every two electrons transferred, four hydrogen ions are translocated across the cytoplasmic membrane), and thus conserves the redox energy in a proton gradient. This Aromatoleum aromaticum (strain DSM 19018 / LMG 30748 / EbN1) (Azoarcus sp. (strain EbN1)) protein is NADH-quinone oxidoreductase subunit B.